The sequence spans 493 residues: Guanosine-5'-triphosphate,3'-diphosphate pyrophosphatase (493 aa).

This sequence belongs to the GppA/Ppx family. GppA subfamily.

It carries out the reaction guanosine 3'-diphosphate 5'-triphosphate + H2O = guanosine 3',5'-bis(diphosphate) + phosphate + H(+). It participates in purine metabolism; ppGpp biosynthesis; ppGpp from GTP: step 2/2. Its function is as follows. Catalyzes the conversion of pppGpp to ppGpp. Guanosine pentaphosphate (pppGpp) is a cytoplasmic signaling molecule which together with ppGpp controls the 'stringent response', an adaptive process that allows bacteria to respond to amino acid starvation, resulting in the coordinated regulation of numerous cellular activities. The protein is Guanosine-5'-triphosphate,3'-diphosphate pyrophosphatase of Salmonella paratyphi B (strain ATCC BAA-1250 / SPB7).